A 1093-amino-acid chain; its full sequence is Probable cellulose synthase A catalytic subunit 3 [UDP-forming] (1093 aa).

At 1–280 (MEASAGLVAG…PSSQINPYRM (280 aa)) the chain is on the cytoplasmic side. Residues cysteine 39, cysteine 42, cysteine 58, cysteine 61, cysteine 66, cysteine 69, cysteine 81, and cysteine 84 each contribute to the Zn(2+) site. Residues 39 to 85 (CQICGDDVGLNPDGEPFVACNECAFPVCRDCYEYERREGTQNCPQCK) form an RING-type; degenerate zinc finger. The segment covering 233–246 (LHQMRNDGGGKDWD) has biased composition (basic and acidic residues). Residues 233 to 257 (LHQMRNDGGGKDWDGDGDDGDLPLM) are disordered. A helical transmembrane segment spans residues 281–301 (VIIIRLVVLGFFFHYRVMHPV). Topologically, residues 302 to 303 (PD) are extracellular. Residues 304–324 (AFALWLISVICEIWFAMSWIL) traverse the membrane as a helical segment. The Cytoplasmic segment spans residues 325–869 (DQFPKWFPIE…CLERFSYINS (545 aa)). Serine 363, lysine 369, glutamate 370, and aspartate 399 together coordinate UDP-alpha-D-glucose. Residue aspartate 399 is part of the active site. Residues 453-480 (VRERRAMKREYEEFKVRINALVAKAQKV) adopt a coiled-coil conformation. Position 540 (lysine 540) interacts with UDP-alpha-D-glucose. Mn(2+) contacts are provided by lysine 541 and aspartate 565. Aspartate 793 is an active-site residue. The helical transmembrane segment at 870–890 (IVYPFTSIPLLAYCTLPAICL) threads the bilayer. Over 891-902 (LTGKFITPELTN) the chain is Extracellular. The helical transmembrane segment at 903-923 (VASLWFMSLFICIFATGILEM) threads the bilayer. Over 924–939 (RWSGVGIDDWWRNEQF) the chain is Cytoplasmic. The chain crosses the membrane as a helical span at residues 940–960 (WVIGGVSSHLFALFQGLLKVI). Residues 961-988 (AGIDTSFTVTSKGGDDEEFSELYTFKWT) are Extracellular-facing. The chain crosses the membrane as a helical span at residues 989-1009 (TLLIPPTTLLLLNFIGVVAGV). At 1010–1020 (SNAINNGYESW) the chain is on the cytoplasmic side. Residues 1021-1041 (GPLFGKLFFAFWVIVHLYPFL) traverse the membrane as a helical segment. Topologically, residues 1042–1050 (KGLVGRQNR) are extracellular. Residues 1051 to 1071 (TPTIVIVWSILLASIFSLLWV) form a helical membrane-spanning segment. Over 1072–1093 (RIDPFLAKNDGPLLEECGLDCN) the chain is Cytoplasmic.

This sequence belongs to the glycosyltransferase 2 family. Plant cellulose synthase subfamily. Mn(2+) serves as cofactor. The cofactor is Zn(2+).

It localises to the cell membrane. The enzyme catalyses [(1-&gt;4)-beta-D-glucosyl](n) + UDP-alpha-D-glucose = [(1-&gt;4)-beta-D-glucosyl](n+1) + UDP + H(+). The protein operates within glycan metabolism; plant cellulose biosynthesis. Functionally, probable catalytic subunit of cellulose synthase terminal complexes ('rosettes'), required for beta-1,4-glucan microfibril crystallization, a major mechanism of the cell wall formation. The chain is Probable cellulose synthase A catalytic subunit 3 [UDP-forming] (CESA3) from Oryza sativa subsp. japonica (Rice).